We begin with the raw amino-acid sequence, 423 residues long: D-tagatose-1,6-bisphosphate aldolase subunit GatZ (423 aa).

Belongs to the GatZ/KbaZ family. GatZ subfamily. As to quaternary structure, forms a complex with GatY.

It participates in carbohydrate metabolism; D-tagatose 6-phosphate degradation; D-glyceraldehyde 3-phosphate and glycerone phosphate from D-tagatose 6-phosphate: step 2/2. Its function is as follows. Component of the tagatose-1,6-bisphosphate aldolase GatYZ that is required for full activity and stability of the Y subunit. Could have a chaperone-like function for the proper and stable folding of GatY. When expressed alone, GatZ does not show any aldolase activity. Is involved in the catabolism of galactitol. This chain is D-tagatose-1,6-bisphosphate aldolase subunit GatZ, found in Salmonella agona (strain SL483).